Consider the following 278-residue polypeptide: Inosose isomerase (278 aa).

A divalent metal cation contacts are provided by Glu142, Asp174, His200, and Glu246.

Belongs to the IolI family. It depends on Mn(2+) as a cofactor. The cofactor is Fe(2+). Requires Co(2+) as cofactor.

The enzyme catalyses scyllo-inosose = scyllo-inosine. It participates in polyol metabolism; myo-inositol degradation into acetyl-CoA. Involved in the reversible interconverion of 2-keto-myo-inositol (2KMI, inosose or 2,4,6/3,5-pentahydroxycyclohexanone) to 1-keto-D-chiro-inositol (1KDCI or 2,3,5/4,6-pentahydroxycyclohexanone). This Bacillus subtilis (strain 168) protein is Inosose isomerase (iolI).